The primary structure comprises 303 residues: MSAVDKTNNLPTLDTLQMVISDVDGTLLDKHHRFHFRTYRAMKYIREKYPNFPIVLATGKQRSAVDLIRIPLDLDAFPAAHVNGCVLYNKGKIVYADHLKPEVVMEVVEATKGNPNIANVVYDEHYVYALTPGREDMKNVKRLAEIGEKVDFSMPCEEAIEKVKSGEIKVIKMAVCEDPDKLDVVRDILGKFPREKFATTQALEFCIELIPSNSNKGTALQYITSNILPEVKNENVISFGDGQNDLSMFAIAGWSVAIKNGMPIAIEKAKAVSRVGNEEGAVGEVLERIFNIPEDYTPPPYTF.

At Ser-63 the chain carries Phosphoserine.

The protein belongs to the HAD-like hydrolase superfamily.

It localises to the cytoplasm. The protein localises to the nucleus. This is an uncharacterized protein from Schizosaccharomyces pombe (strain 972 / ATCC 24843) (Fission yeast).